The primary structure comprises 375 residues: 4,4'-diaponeurosporenoate glycosyltransferase (375 aa).

The next 4 membrane-spanning stretches (helical) occupy residues 3–23 (WLSRILTVIVTMSMACGALIF), 164–184 (FYEGFSAIFNLMTVVGMNVFS), 277–297 (IMTAIVLWLFGSIASILGLCL), and 330–350 (FSNLLMVCHPLLFMFFTKIFI).

Belongs to the glycosyltransferase 2 family. CrtQ subfamily.

Its subcellular location is the cell membrane. Its pathway is carotenoid biosynthesis; staphyloxanthin biosynthesis; staphyloxanthin from farnesyl diphosphate: step 4/5. Its function is as follows. Catalyzes the glycosylation of 4,4'-diaponeurosporenoate, i.e. the esterification of glucose at the C1'' position with the carboxyl group of 4,4'-diaponeurosporenic acid, to form glycosyl-4,4'-diaponeurosporenoate. This is a step in the biosynthesis of staphyloxanthin, an orange pigment present in most staphylococci strains. This chain is 4,4'-diaponeurosporenoate glycosyltransferase (crtQ), found in Staphylococcus aureus (strain Mu50 / ATCC 700699).